A 1936-amino-acid polypeptide reads, in one-letter code: Potassium channel K1 (1936 aa).

6 consecutive transmembrane segments (helical) span residues 175–195, 598–618, 643–663, 670–690, 701–721, and 734–754; these read IIIL…YILL, VWII…LWAA, GYIE…GLYF, YIFS…SFIM, TYWF…AEST, and IIII…SGIM. Residues 772–788 constitute an intramembrane region (pore-forming); the sequence is FVYFGVITMSTVGYGDY. A helical membrane pass occupies residues 791–811; the sequence is VTPAGKCLTMFIIVTCFTFVG. The stretch at 1141–1185 forms a coiled coil; it reads DTSSMINYKSKSRVNYKMVKGTKNEFIRNQNYNINSIYYANNDNM.

It is found in the membrane. The catalysed reaction is K(+)(in) = K(+)(out). With respect to regulation, partially inhibited by Ba(2+) and quinine. Probably insensitive to tetraethylammonium (TEA). In terms of biological role, likely a predominant potassium channel in the erythrocytic stages of parasites. Mediates transmembrane potassium transport. Required for the development of oocysts in the mosquito midgut. The protein is Potassium channel K1 of Plasmodium berghei (strain Anka).